The primary structure comprises 320 residues: Ferrochelatase (320 aa).

His194 and Glu275 together coordinate Fe cation.

It belongs to the ferrochelatase family.

It is found in the cytoplasm. The catalysed reaction is heme b + 2 H(+) = protoporphyrin IX + Fe(2+). It participates in porphyrin-containing compound metabolism; protoheme biosynthesis; protoheme from protoporphyrin-IX: step 1/1. Its function is as follows. Catalyzes the ferrous insertion into protoporphyrin IX. The chain is Ferrochelatase from Vibrio parahaemolyticus serotype O3:K6 (strain RIMD 2210633).